The sequence spans 353 residues: Methylthioribose-1-phosphate isomerase (353 aa).

Substrate is bound by residues 51 to 53 (RGA), Arg-94, and Gln-199. The active-site Proton donor is Asp-240. Residue 250–251 (NK) coordinates substrate.

Belongs to the eIF-2B alpha/beta/delta subunits family. MtnA subfamily. As to quaternary structure, homodimer.

The enzyme catalyses 5-(methylsulfanyl)-alpha-D-ribose 1-phosphate = 5-(methylsulfanyl)-D-ribulose 1-phosphate. It participates in amino-acid biosynthesis; L-methionine biosynthesis via salvage pathway; L-methionine from S-methyl-5-thio-alpha-D-ribose 1-phosphate: step 1/6. Catalyzes the interconversion of methylthioribose-1-phosphate (MTR-1-P) into methylthioribulose-1-phosphate (MTRu-1-P). This chain is Methylthioribose-1-phosphate isomerase, found in Bacillus velezensis (strain DSM 23117 / BGSC 10A6 / LMG 26770 / FZB42) (Bacillus amyloliquefaciens subsp. plantarum).